Reading from the N-terminus, the 317-residue chain is tRNA(Ile)-lysidine synthase (317 aa).

Residue 30–35 (SGGSDS) participates in ATP binding.

The protein belongs to the tRNA(Ile)-lysidine synthase family.

It is found in the cytoplasm. The catalysed reaction is cytidine(34) in tRNA(Ile2) + L-lysine + ATP = lysidine(34) in tRNA(Ile2) + AMP + diphosphate + H(+). Ligates lysine onto the cytidine present at position 34 of the AUA codon-specific tRNA(Ile) that contains the anticodon CAU, in an ATP-dependent manner. Cytidine is converted to lysidine, thus changing the amino acid specificity of the tRNA from methionine to isoleucine. This is tRNA(Ile)-lysidine synthase from Chlamydia felis (strain Fe/C-56) (Chlamydophila felis).